A 565-amino-acid chain; its full sequence is Proline--tRNA ligase (565 aa).

The protein belongs to the class-II aminoacyl-tRNA synthetase family. ProS type 1 subfamily. Homodimer.

Its subcellular location is the cytoplasm. It carries out the reaction tRNA(Pro) + L-proline + ATP = L-prolyl-tRNA(Pro) + AMP + diphosphate. In terms of biological role, catalyzes the attachment of proline to tRNA(Pro) in a two-step reaction: proline is first activated by ATP to form Pro-AMP and then transferred to the acceptor end of tRNA(Pro). As ProRS can inadvertently accommodate and process non-cognate amino acids such as alanine and cysteine, to avoid such errors it has two additional distinct editing activities against alanine. One activity is designated as 'pretransfer' editing and involves the tRNA(Pro)-independent hydrolysis of activated Ala-AMP. The other activity is designated 'posttransfer' editing and involves deacylation of mischarged Ala-tRNA(Pro). The misacylated Cys-tRNA(Pro) is not edited by ProRS. The sequence is that of Proline--tRNA ligase from Lactobacillus johnsonii (strain CNCM I-12250 / La1 / NCC 533).